Reading from the N-terminus, the 343-residue chain is 4-hydroxy-3-methylbut-2-enyl diphosphate reductase (343 aa).

A [4Fe-4S] cluster-binding site is contributed by cysteine 18. Histidine 47 and histidine 83 together coordinate (2E)-4-hydroxy-3-methylbut-2-enyl diphosphate. Dimethylallyl diphosphate contacts are provided by histidine 47 and histidine 83. 2 residues coordinate isopentenyl diphosphate: histidine 47 and histidine 83. [4Fe-4S] cluster is bound at residue cysteine 105. Histidine 133 lines the (2E)-4-hydroxy-3-methylbut-2-enyl diphosphate pocket. Histidine 133 contributes to the dimethylallyl diphosphate binding site. Histidine 133 provides a ligand contact to isopentenyl diphosphate. Glutamate 135 acts as the Proton donor in catalysis. (2E)-4-hydroxy-3-methylbut-2-enyl diphosphate is bound at residue threonine 174. Cysteine 204 contributes to the [4Fe-4S] cluster binding site. Residues serine 232, serine 233, asparagine 234, and serine 277 each contribute to the (2E)-4-hydroxy-3-methylbut-2-enyl diphosphate site. Residues serine 232, serine 233, asparagine 234, and serine 277 each contribute to the dimethylallyl diphosphate site. Isopentenyl diphosphate-binding residues include serine 232, serine 233, asparagine 234, and serine 277.

Belongs to the IspH family. [4Fe-4S] cluster is required as a cofactor.

The catalysed reaction is isopentenyl diphosphate + 2 oxidized [2Fe-2S]-[ferredoxin] + H2O = (2E)-4-hydroxy-3-methylbut-2-enyl diphosphate + 2 reduced [2Fe-2S]-[ferredoxin] + 2 H(+). It catalyses the reaction dimethylallyl diphosphate + 2 oxidized [2Fe-2S]-[ferredoxin] + H2O = (2E)-4-hydroxy-3-methylbut-2-enyl diphosphate + 2 reduced [2Fe-2S]-[ferredoxin] + 2 H(+). It functions in the pathway isoprenoid biosynthesis; dimethylallyl diphosphate biosynthesis; dimethylallyl diphosphate from (2E)-4-hydroxy-3-methylbutenyl diphosphate: step 1/1. It participates in isoprenoid biosynthesis; isopentenyl diphosphate biosynthesis via DXP pathway; isopentenyl diphosphate from 1-deoxy-D-xylulose 5-phosphate: step 6/6. Catalyzes the conversion of 1-hydroxy-2-methyl-2-(E)-butenyl 4-diphosphate (HMBPP) into a mixture of isopentenyl diphosphate (IPP) and dimethylallyl diphosphate (DMAPP). Acts in the terminal step of the DOXP/MEP pathway for isoprenoid precursor biosynthesis. This Bartonella henselae (strain ATCC 49882 / DSM 28221 / CCUG 30454 / Houston 1) (Rochalimaea henselae) protein is 4-hydroxy-3-methylbut-2-enyl diphosphate reductase.